A 211-amino-acid chain; its full sequence is tRNA (guanine-N(7)-)-methyltransferase (211 aa).

4 residues coordinate S-adenosyl-L-methionine: Glu44, Asp69, Asp96, and Asp118. Asp118 is a catalytic residue. Lys122 lines the substrate pocket. The interaction with RNA stretch occupies residues 124–129; that stretch reads RHEKRR. Residues Asp154 and 191–194 contribute to the substrate site; that span reads TEYE.

It belongs to the class I-like SAM-binding methyltransferase superfamily. TrmB family.

It carries out the reaction guanosine(46) in tRNA + S-adenosyl-L-methionine = N(7)-methylguanosine(46) in tRNA + S-adenosyl-L-homocysteine. Its pathway is tRNA modification; N(7)-methylguanine-tRNA biosynthesis. Functionally, catalyzes the formation of N(7)-methylguanine at position 46 (m7G46) in tRNA. This chain is tRNA (guanine-N(7)-)-methyltransferase, found in Streptococcus pneumoniae (strain CGSP14).